Reading from the N-terminus, the 136-residue chain is MILGIGTDLCDIRRIESSLERFGDRFTHRVFTDGERGKCDRRAARGPSYARRFAAKEACAKALGTGMSQGVFWRDMEVVNLPSGQPTLNLTGGAREHLARMVPAGHEARLHLTLTDEPPLAQAFVIIEAVPITATS.

Mg(2+)-binding residues include D8 and E57.

The protein belongs to the P-Pant transferase superfamily. AcpS family. Mg(2+) serves as cofactor.

It localises to the cytoplasm. It carries out the reaction apo-[ACP] + CoA = holo-[ACP] + adenosine 3',5'-bisphosphate + H(+). In terms of biological role, transfers the 4'-phosphopantetheine moiety from coenzyme A to a Ser of acyl-carrier-protein. The sequence is that of Holo-[acyl-carrier-protein] synthase from Methylorubrum extorquens (strain CM4 / NCIMB 13688) (Methylobacterium extorquens).